A 525-amino-acid polypeptide reads, in one-letter code: Sensory neuron membrane protein 1 (525 aa).

Residues 1–11 (MLLPKELKYAA) lie on the Cytoplasmic side of the membrane. A helical transmembrane segment spans residues 12–32 (IAGGVAVFGLIFGWVLFPVIL). Over 33 to 456 (KGQLKKEMAL…LKHQLFIPKR (424 aa)) the chain is Extracellular. 3 N-linked (GlcNAc...) asparagine glycosylation sites follow: N67, N229, and N324. 3 cysteine pairs are disulfide-bonded: C268–C333, C297–C352, and C335–C341. N440 carries an N-linked (GlcNAc...) asparagine glycan. The chain crosses the membrane as a helical span at residues 457–477 (VVGVLRWWMVSFGSLGADIGI). Residues 478 to 525 (VYHFRDHIMRLAVSGDTKVSKVTPEEDPEQKDISVIGPPAQEPAKINI) lie on the Cytoplasmic side of the membrane. The segment at 497–525 (SKVTPEEDPEQKDISVIGPPAQEPAKINI) is disordered.

This sequence belongs to the CD36 family.

It is found in the cell membrane. Its function is as follows. Plays an olfactory role that is not restricted to pheromone sensitivity. This chain is Sensory neuron membrane protein 1, found in Mamestra brassicae (Cabbage moth).